The following is a 276-amino-acid chain: uncharacterized protein (276 aa).

The segment at M1–T20 is disordered.

This is an uncharacterized protein from Dictyostelium discoideum (Social amoeba).